A 251-amino-acid chain; its full sequence is Tyrosine phosphatase-like protein J3 (251 aa).

Residues 26–251 form the Tyrosine-protein phosphatase domain; the sequence is IADEYYTIVP…PVLQNSKRRE (226 aa).

This sequence belongs to the protein-tyrosine phosphatase family.

In Microplitis demolitor (Parasitoid wasp), this protein is Tyrosine phosphatase-like protein J3 (J4).